Here is a 208-residue protein sequence, read N- to C-terminus: Capsid protein (208 aa).

Basic and acidic residues predominate over residues 1–12; it reads MPPKRQNTETRK. The interval 1-23 is disordered; sequence MPPKRQNTETRKARQNRARRSRQ. Over residues 13-22 the composition is skewed to basic residues; it reads ARQNRARRSR.

It localises to the virion. Functionally, capsid protein self-assembles to form a quasi spherical capsid, about 25-35 nm. The protein is Capsid protein of Pelargonium zonate spot virus (isolate Tomato/Italy/1982) (PZSV).